The following is a 311-amino-acid chain: Ribonuclease HIII (311 aa).

The RNase H type-2 domain occupies 95 to 311 (MSIVGSDEVG…NTEKAFRLLK (217 aa)). 3 residues coordinate a divalent metal cation: D101, E102, and D206.

Belongs to the RNase HII family. RnhC subfamily. It depends on Mn(2+) as a cofactor. The cofactor is Mg(2+).

Its subcellular location is the cytoplasm. The catalysed reaction is Endonucleolytic cleavage to 5'-phosphomonoester.. In terms of biological role, endonuclease that specifically degrades the RNA of RNA-DNA hybrids. The sequence is that of Ribonuclease HIII from Bacillus cereus (strain AH187).